The sequence spans 326 residues: Ribonuclease H2 subunit A (326 aa).

The disordered stretch occupies residues 1–47; sequence MKDDHDAWEPEELVSDNNSSENELQEDQNSSITFLPPSVNKSNPAKS. The segment covering 15–47 has biased composition (polar residues); it reads SDNNSSENELQEDQNSSITFLPPSVNKSNPAKS. The RNase H type-2 domain occupies 63–286; it reads PYRLGVDEAG…AKDLLELPSK (224 aa). The a divalent metal cation site is built by Asp-69, Glu-70, and Asp-180.

It belongs to the RNase HII family. Eukaryotic subfamily. It depends on Mn(2+) as a cofactor. Mg(2+) is required as a cofactor.

The catalysed reaction is Endonucleolytic cleavage to 5'-phosphomonoester.. In terms of biological role, endonuclease that specifically degrades the RNA of RNA-DNA hybrids. Participates in DNA replication. In Schizosaccharomyces pombe (strain 972 / ATCC 24843) (Fission yeast), this protein is Ribonuclease H2 subunit A (rnh201).